A 1467-amino-acid chain; its full sequence is Helicase ARIP4 (1467 aa).

Disordered regions lie at residues 1-150 (MSDE…YAAP) and 186-234 (DSSS…GGTH). Residues 11 to 49 (PDLDPDVELEDAEEEEEEEEVAVEECDRDDEEDLLDDPS) show a composition bias toward acidic residues. Residues 72–82 (TSTTSSQSEPS) show a composition bias toward low complexity. Over residues 100-115 (KKRAQKPSHMRRNIRK) the composition is skewed to basic residues. Residues K115 and K127 each participate in a glycyl lysine isopeptide (Lys-Gly) (interchain with G-Cter in SUMO2) cross-link. Composition is skewed to basic and acidic residues over residues 133–147 (ELERRKRLEQQRKDY) and 192–201 (EDEKSSRDEV). Residue K272 forms a Glycyl lysine isopeptide (Lys-Gly) (interchain with G-Cter in SUMO2) linkage. Residues 292 to 512 (RFKTSSGFGC…WCMVDFVRPD (221 aa)) form the Helicase ATP-binding domain. 305–312 (HSMGLGKT) is an ATP binding site. A DEAH box motif is present at residues 463 to 466 (DEGH). Residues 551 to 555 (LHSLL) carry the LXXLL motif 1 motif. Positions 649–673 (GSAGTSARCPPQGTKGKGEDSTLAS) are disordered. Residues K665, K682, K759, K901, K1014, and K1018 each participate in a glycyl lysine isopeptide (Lys-Gly) (interchain with G-Cter in SUMO2) cross-link. A Helicase C-terminal domain is found at 728–896 (HLIEESVKLG…RVVDDLNPML (169 aa)). Residues 1120 to 1171 (RATGKPKVPEDGRMAASGSQGPSCESTSNGRHSASSPKAPDPEGLARPVSPD) are disordered. The span at 1136-1155 (SGSQGPSCESTSNGRHSASS) shows a compositional bias: polar residues. Residues S1169 and S1172 each carry the phosphoserine modification. 2 disordered regions span residues 1184–1221 (DVAAARESRQSSPSTNAALPGPPAQLMDSSAVPGTALG) and 1247–1284 (PVLDLRGHKRKLATPPAAQESSRRRSRKGHLPAPVQPY). Residue T1260 is modified to Phosphothreonine. Positions 1329-1333 (LSNLL) match the LXXLL motif 2 motif. The disordered stretch occupies residues 1445 to 1467 (AEVGFSSNDDEDKDDDVIEVTGK). Residues 1452-1467 (NDDEDKDDDVIEVTGK) show a composition bias toward acidic residues.

The protein belongs to the SNF2/RAD54 helicase family. As to quaternary structure, interacts with AR via its N-terminus. Interacts with DYRK1A. Binds DNA and mononucleosomes, but does not seem to form large multiprotein complexes. In terms of processing, sumoylated.

The protein localises to the nucleus. It catalyses the reaction ATP + H2O = ADP + phosphate + H(+). Enzyme activity is enhanced by dsDNA (double-stranded DNA) and ssDNA (single-stranded DNA). In terms of biological role, DNA helicase that modulates androgen receptor (AR)-dependent transactivation in a promoter-dependent manner. Not able to remodel mononucleosomes in vitro. The protein is Helicase ARIP4 (RAD54L2) of Homo sapiens (Human).